A 478-amino-acid polypeptide reads, in one-letter code: Antiviral innate immune response effector IFIT1 (478 aa).

6 TPR repeats span residues Val-52–Glu-85, Leu-95–Leu-128, Ile-141–Asn-174, Ile-183–Asn-216, Tyr-218–Ser-249, and Thr-251–Ser-284. Trp-147 provides a ligand contact to mRNA. Gly-190 is a binding site for RNA. Positions 259, 289, 290, and 336 each coordinate RNA. TPR repeat units lie at residues Ala-305 to Phe-339, Glu-340 to Val-373, Gln-378 to Ser-412, and Leu-437 to Phe-470.

The protein belongs to the IFIT family. As to quaternary structure, component of an interferon-dependent multiprotein complex, at least composed of IFIT1, IFIT2 and IFIT3. Interacts (via TPR repeats 1-4) with RPL15. Interacts with STING1/MITA; could disrupt STING1 interaction with MAVS or TBK1, acting as a negative-feedback regulator of virus-triggered signaling. Interacts with EIF3E; this could be an alternative way to inhibit translation. Post-translationally, phosphorylated. ISGylated.

It is found in the cytoplasm. In terms of biological role, plays a key role in the innate immune response as part of an interferon-dependent multiprotein complex, recognizing and sequestering viral RNAs that lack host-specific 2'-O-methylation at their 5' cap. By distinguishing these RNAs from host mRNAs, inhibits their translation by competing with the translation initiation factor eIF4E. Could also prevent viral replication through its interaction with DNA replication origin-binding protein E1 of several viruses. Causes the translocation of E1 from the nucleus to the cytoplasm and can also inhibit its helicase activity in vitro. Exhibits antiviral activity against many viruses from the Flaviviridae (West Nile virus, Dengue virus, hepatitis C virus), Coronaviridae (human 229E coronavirus, SARS-CoV-2 and SARS-CoV), Poxviridae (vaccinia virus) and Togaviridae (Sindbis virus) families. The sequence is that of Antiviral innate immune response effector IFIT1 from Homo sapiens (Human).